Reading from the N-terminus, the 219-residue chain is Acetylxylan esterase (219 aa).

Residue serine 15 is the Nucleophile of the active site. Residues aspartate 191 and histidine 194 each act as charge relay system in the active site.

Belongs to the 'GDSL' lipolytic enzyme family. Homooctamer, presenting a unique donut-shaped quaternary structure built of two staggered tetrameric rings. The eight active sites are organized in four closely situated pairs, which face the relatively wide internal cavity.

The protein resides in the cytoplasm. The catalysed reaction is Deacetylation of xylans and xylo-oligosaccharides.. The protein operates within glycan degradation; xylan degradation. In terms of biological role, acetylxylan esterase involved in the degradation of xylan, a major structural heterogeneous polysaccharide found in plant biomass representing the second most abundant polysaccharide in the biosphere, after cellulose. Cleaves acetyl side groups from the xylose backbone units of the hemicellulolytic polymer xylan and xylo-oligosaccharides. Hydrolyzes about 20%-30% of the available acetyl groups on fully acetylated birch wood xylan. Completely deacetylates xylobiose peracetate (fully acetylated), and is active on both the alpha- and beta-forms of the sugar. Also hydrolyzes fully acetylated methyl-beta-D-xylopyranoside and methyl-beta-D-glucopyranoside, and the synthetic substrates 2-naphthyl acetate, 4-nitrophenyl acetate, 4-methylumbelliferyl acetate, and phenyl acetate. This is Acetylxylan esterase from Geobacillus stearothermophilus (Bacillus stearothermophilus).